The following is a 312-amino-acid chain: Methionyl-tRNA formyltransferase (312 aa).

110–113 (SLLP) contacts (6S)-5,6,7,8-tetrahydrofolate.

It belongs to the Fmt family.

The enzyme catalyses L-methionyl-tRNA(fMet) + (6R)-10-formyltetrahydrofolate = N-formyl-L-methionyl-tRNA(fMet) + (6S)-5,6,7,8-tetrahydrofolate + H(+). Functionally, attaches a formyl group to the free amino group of methionyl-tRNA(fMet). The formyl group appears to play a dual role in the initiator identity of N-formylmethionyl-tRNA by promoting its recognition by IF2 and preventing the misappropriation of this tRNA by the elongation apparatus. This is Methionyl-tRNA formyltransferase from Mycobacterium ulcerans (strain Agy99).